The sequence spans 526 residues: Microphthalmia-associated transcription factor (526 aa).

The tract at residues 20–54 is disordered; that stretch reads EPKTYYELKSQPLKSSSSAEHSGASKPPLSSSTMT. Over residues 34–44 the composition is skewed to low complexity; that stretch reads SSSSAEHSGAS. Ser-180 carries the phosphoserine; by MAPK modification. A Glycyl lysine isopeptide (Lys-Gly) (interchain with G-Cter in SUMO) cross-link involves residue Lys-289. Residues 311–364 form the bHLH domain; the sequence is QKKDNHNLIERRRRFNINDRIKELGTLIPKSNDPDMRWNKGTILKASVDYIRKL. Residues 355 to 401 adopt a coiled-coil conformation; that stretch reads KASVDYIRKLQREQQRAKDLENRQKKLEHANRHLLLRVQELEMQARA. Positions 374–395 are leucine-zipper; the sequence is LENRQKKLEHANRHLLLRVQEL. Residue Ser-405 is modified to Phosphoserine; by GSK3. The residue at position 414 (Ser-414) is a Phosphoserine. A Glycyl lysine isopeptide (Lys-Gly) (interchain with G-Cter in SUMO) cross-link involves residue Lys-423. Phosphoserine is present on Ser-491. The segment at 496–526 is disordered; it reads TDPLLSSVSPGASKTSSRRSSMSAEETEHAC. The span at 507-519 shows a compositional bias: low complexity; the sequence is ASKTSSRRSSMSA. Position 516 is a phosphoserine; by RPS6KA1 (Ser-516).

It belongs to the MiT/TFE family. Homodimer or heterodimer; dimerization is mediated via the coiled coil region. Efficient DNA binding requires dimerization with another bHLH protein. Binds DNA in the form of homodimer or heterodimer with either TFE3, TFEB or TFEC. Identified in a complex with HINT1 and CTNNB1. Interacts with KARS1. Interacts with VSX2. Phosphorylation at Ser-405 significantly enhances the ability to bind the tyrosinase promoter. Phosphorylated at Ser-180 and Ser-516 following KIT signaling, triggering a short live activation: Phosphorylation at Ser-180 and Ser-516 by MAPK and RPS6KA1, respectively, activate the transcription factor activity but also promote ubiquitination and subsequent degradation by the proteasome. Phosphorylated in response to blue light (415nm). In terms of processing, ubiquitinated following phosphorylation at Ser-180, leading to subsequent degradation by the proteasome. Deubiquitinated by USP13, preventing its degradation.

The protein localises to the nucleus. The protein resides in the cytoplasm. Transcription factor that regulates the expression of genes with essential roles in cell differentiation, proliferation and survival. Binds to M-boxes (5'-TCATGTG-3') and symmetrical DNA sequences (E-boxes) (5'-CACGTG-3') found in the promoters of target genes, such as BCL2 and tyrosinase (TYR). Plays an important role in melanocyte development by regulating the expression of tyrosinase (TYR) and tyrosinase-related protein 1 (TYRP1). Plays a critical role in the differentiation of various cell types, such as neural crest-derived melanocytes, mast cells, osteoclasts and optic cup-derived retinal pigment epithelium. This chain is Microphthalmia-associated transcription factor (Mitf), found in Rattus norvegicus (Rat).